Reading from the N-terminus, the 311-residue chain is Methionyl-tRNA formyltransferase (311 aa).

Residue 110–113 participates in (6S)-5,6,7,8-tetrahydrofolate binding; the sequence is SLLP.

This sequence belongs to the Fmt family.

The catalysed reaction is L-methionyl-tRNA(fMet) + (6R)-10-formyltetrahydrofolate = N-formyl-L-methionyl-tRNA(fMet) + (6S)-5,6,7,8-tetrahydrofolate + H(+). In terms of biological role, attaches a formyl group to the free amino group of methionyl-tRNA(fMet). The formyl group appears to play a dual role in the initiator identity of N-formylmethionyl-tRNA by promoting its recognition by IF2 and preventing the misappropriation of this tRNA by the elongation apparatus. This is Methionyl-tRNA formyltransferase from Streptococcus pneumoniae serotype 19F (strain G54).